The primary structure comprises 237 residues: Phosphoribosylaminoimidazole-succinocarboxamide synthase (237 aa).

The protein belongs to the SAICAR synthetase family.

It carries out the reaction 5-amino-1-(5-phospho-D-ribosyl)imidazole-4-carboxylate + L-aspartate + ATP = (2S)-2-[5-amino-1-(5-phospho-beta-D-ribosyl)imidazole-4-carboxamido]succinate + ADP + phosphate + 2 H(+). Its pathway is purine metabolism; IMP biosynthesis via de novo pathway; 5-amino-1-(5-phospho-D-ribosyl)imidazole-4-carboxamide from 5-amino-1-(5-phospho-D-ribosyl)imidazole-4-carboxylate: step 1/2. The protein is Phosphoribosylaminoimidazole-succinocarboxamide synthase of Psychrobacter cryohalolentis (strain ATCC BAA-1226 / DSM 17306 / VKM B-2378 / K5).